The chain runs to 189 residues: Protein GrpE (189 aa).

Basic and acidic residues predominate over residues 1–14; it reads MTDHTPLQPKHEIT. Positions 1–23 are disordered; that stretch reads MTDHTPLQPKHEITDQADQDTSA.

The protein belongs to the GrpE family. As to quaternary structure, homodimer.

It localises to the cytoplasm. Participates actively in the response to hyperosmotic and heat shock by preventing the aggregation of stress-denatured proteins, in association with DnaK and GrpE. It is the nucleotide exchange factor for DnaK and may function as a thermosensor. Unfolded proteins bind initially to DnaJ; upon interaction with the DnaJ-bound protein, DnaK hydrolyzes its bound ATP, resulting in the formation of a stable complex. GrpE releases ADP from DnaK; ATP binding to DnaK triggers the release of the substrate protein, thus completing the reaction cycle. Several rounds of ATP-dependent interactions between DnaJ, DnaK and GrpE are required for fully efficient folding. In Lawsonia intracellularis (strain PHE/MN1-00), this protein is Protein GrpE.